Here is a 362-residue protein sequence, read N- to C-terminus: Chorismate synthase (362 aa).

2 residues coordinate NADP(+): Arg-47 and Arg-53. FMN is bound by residues 124 to 126 (RSS), Gly-285, 300 to 304 (KPTAT), and Arg-326.

This sequence belongs to the chorismate synthase family. As to quaternary structure, homotetramer. FMNH2 serves as cofactor.

The catalysed reaction is 5-O-(1-carboxyvinyl)-3-phosphoshikimate = chorismate + phosphate. It functions in the pathway metabolic intermediate biosynthesis; chorismate biosynthesis; chorismate from D-erythrose 4-phosphate and phosphoenolpyruvate: step 7/7. Catalyzes the anti-1,4-elimination of the C-3 phosphate and the C-6 proR hydrogen from 5-enolpyruvylshikimate-3-phosphate (EPSP) to yield chorismate, which is the branch point compound that serves as the starting substrate for the three terminal pathways of aromatic amino acid biosynthesis. This reaction introduces a second double bond into the aromatic ring system. This chain is Chorismate synthase, found in Cyanothece sp. (strain PCC 7425 / ATCC 29141).